A 73-amino-acid chain; its full sequence is Translation initiation factor IF-1 (73 aa).

The region spanning 1 to 73 (MPKKDGAIEI…SRGRIVYRYK (73 aa)) is the S1-like domain.

Belongs to the IF-1 family. Component of the 30S ribosomal translation pre-initiation complex which assembles on the 30S ribosome in the order IF-2 and IF-3, IF-1 and N-formylmethionyl-tRNA(fMet); mRNA recruitment can occur at any time during PIC assembly.

The protein localises to the cytoplasm. One of the essential components for the initiation of protein synthesis. Stabilizes the binding of IF-2 and IF-3 on the 30S subunit to which N-formylmethionyl-tRNA(fMet) subsequently binds. Helps modulate mRNA selection, yielding the 30S pre-initiation complex (PIC). Upon addition of the 50S ribosomal subunit IF-1, IF-2 and IF-3 are released leaving the mature 70S translation initiation complex. In Frankia alni (strain DSM 45986 / CECT 9034 / ACN14a), this protein is Translation initiation factor IF-1.